A 307-amino-acid polypeptide reads, in one-letter code: Methionyl-tRNA formyltransferase (307 aa).

108–111 (SLLP) is a (6S)-5,6,7,8-tetrahydrofolate binding site.

The protein belongs to the Fmt family.

The catalysed reaction is L-methionyl-tRNA(fMet) + (6R)-10-formyltetrahydrofolate = N-formyl-L-methionyl-tRNA(fMet) + (6S)-5,6,7,8-tetrahydrofolate + H(+). Attaches a formyl group to the free amino group of methionyl-tRNA(fMet). The formyl group appears to play a dual role in the initiator identity of N-formylmethionyl-tRNA by promoting its recognition by IF2 and preventing the misappropriation of this tRNA by the elongation apparatus. In Stenotrophomonas maltophilia (strain R551-3), this protein is Methionyl-tRNA formyltransferase.